An 81-amino-acid polypeptide reads, in one-letter code: Protein Vpu (81 aa).

Residues 1–7 (MQSLQIL) are Extracellular-facing. A helical membrane pass occupies residues 8–28 (AIVSLVVVAIIAIVVWTIVLI). The Cytoplasmic segment spans residues 29–81 (EYRKILRQRKIDRLFDRIREKAEDSGNESERDQEELSALVEMGHLAPWDVDDL). 2 positions are modified to phosphoserine; by host CK2: S53 and S57.

It belongs to the HIV-1 VPU protein family. In terms of assembly, homopentamer. Interacts with host CD4 and BRTC; these interactions induce proteasomal degradation of CD4. Interacts with host BST2; this interaction leads to the degradation of host BST2. Interacts with host FBXW11. Interacts with host AP1M1; this interaction plays a role in the mistrafficking and subsequent degradation of host BST2. Interacts with host RANBP2; this interaction allows Vpu to down-regulate host BLM sumoylation. In terms of processing, phosphorylated by host CK2. This phosphorylation is necessary for interaction with human BTRC and degradation of CD4.

The protein resides in the host membrane. Its activity is regulated as follows. Ion channel activity is inhibited by hexamethylene amiloride in vitro. In terms of biological role, enhances virion budding by targeting host CD4 and Tetherin/BST2 to proteasome degradation. Degradation of CD4 prevents any unwanted premature interactions between viral Env and its host receptor CD4 in the endoplasmic reticulum. Degradation of antiretroviral protein Tetherin/BST2 is important for virion budding, as BST2 tethers new viral particles to the host cell membrane. Mechanistically, Vpu bridges either CD4 or BST2 to BTRC, a substrate recognition subunit of the Skp1/Cullin/F-box protein E3 ubiquitin ligase, induces their ubiquitination and subsequent proteasomal degradation. The alteration of the E3 ligase specificity by Vpu seems to promote the degradation of host IKBKB, leading to NF-kappa-B down-regulation and subsequent apoptosis. Acts as a viroporin that forms an oligomeric ion channel in membranes. Modulates the host DNA repair mechanisms to promote degradation of nuclear viral cDNA in cells that are already productively infected in order to suppress immune sensing and proviral hyper-integration (superinfection). Manipulates PML-NBs and modulates SUMOylation of host BLM protein thereby enhancing its DNA-end processing activity toward viral unintegrated linear DNA. Also inhibits RAD52-mediated homologous repair of viral cDNA, preventing the generation of dead-end circular forms of single copies of the long terminal repeat and permitting sustained nucleolytic attack. The chain is Protein Vpu from Homo sapiens (Human).